The sequence spans 183 residues: Large ribosomal subunit protein uL5 (183 aa).

Belongs to the universal ribosomal protein uL5 family. In terms of assembly, part of the 50S ribosomal subunit; part of the 5S rRNA/L5/L18/L25 subcomplex. Contacts the 5S rRNA and the P site tRNA. Forms a bridge to the 30S subunit in the 70S ribosome.

In terms of biological role, this is one of the proteins that bind and probably mediate the attachment of the 5S RNA into the large ribosomal subunit, where it forms part of the central protuberance. In the 70S ribosome it contacts protein S13 of the 30S subunit (bridge B1b), connecting the 2 subunits; this bridge is implicated in subunit movement. Contacts the P site tRNA; the 5S rRNA and some of its associated proteins might help stabilize positioning of ribosome-bound tRNAs. The polypeptide is Large ribosomal subunit protein uL5 (Tropheryma whipplei (strain TW08/27) (Whipple's bacillus)).